A 213-amino-acid chain; its full sequence is ABA-inducible protein PHV A1 (213 aa).

2 disordered regions span residues 1–158 (MASN…KDKT) and 182–213 (NTLGMGGDNTSATKDATTGATVKDTTTTTRNH). Positions 13 to 23 (GETKARTEEKT) are enriched in basic and acidic residues. 9 LEA 11-mer repeat repeats span residues 27–37 (MGATKQKAGQT), 38–48 (TEATKQKAGET), 49–59 (AEATKQKTGET), 60–70 (AEAAKQKAAEA), 78–88 (AQAAKDKTYET), 89–99 (AQAAKERAAQG), 111–121 (TEAAKQKAAET), 122–132 (TEAAKQKAAEA), and 133–143 (TEAAKQKASDT). The segment at 27-143 (MGATKQKAGQ…EAAKQKASDT (117 aa)) is 11 X 11 AA tandem repeats of T-E-A-A-K-Q-K-A-A-E-T. Composition is skewed to basic and acidic residues over residues 41 to 74 (TKQKAGETAEATKQKTGETAEAAKQKAAEAKDKT), 81 to 98 (AKDKTYETAQAAKERAAQ), and 109 to 140 (EKTEAAKQKAAETTEAAKQKAAEATEAAKQKA). Residues 193-213 (ATKDATTGATVKDTTTTTRNH) are compositionally biased toward low complexity.

This sequence belongs to the LEA type 4 family.

The chain is ABA-inducible protein PHV A1 (HVA1) from Hordeum vulgare (Barley).